A 128-amino-acid chain; its full sequence is MRHYEIVFMVHPDQSEQVPGMIERYTGAITTSGGTIHRLEDWGRRQLAYPIDKLHKAHYVLMNVEAEQAVIDELETNFRFNDAVIRNMIMRTKHAVTEVSPMAKAKEERFTRRDDERREEATEAASEE.

Residues 100-128 are disordered; it reads SPMAKAKEERFTRRDDERREEATEAASEE. Basic and acidic residues predominate over residues 104-121; sequence KAKEERFTRRDDERREEA.

The protein belongs to the bacterial ribosomal protein bS6 family.

Functionally, binds together with bS18 to 16S ribosomal RNA. The sequence is that of Small ribosomal subunit protein bS6 from Aeromonas hydrophila subsp. hydrophila (strain ATCC 7966 / DSM 30187 / BCRC 13018 / CCUG 14551 / JCM 1027 / KCTC 2358 / NCIMB 9240 / NCTC 8049).